The chain runs to 486 residues: Odorant receptor coreceptor (486 aa).

Over 1–47 the chain is Cytoplasmic; it reads MTTSMQPSKYTGLVADLMPNIRAMKYSGLFMHNFTGGSAFMKKVYSS. Residues 48–68 form a helical membrane-spanning segment; it reads VHLVFLLMQFTFILVNMALNA. The Extracellular segment spans residues 69-75; sequence EEVNELS. A helical membrane pass occupies residues 76–96; it reads GNTITTLFFTHCITKFIYLAV. The Cytoplasmic portion of the chain corresponds to 97–135; that stretch reads NQKNFYRTLNIWNQVNTHPLFAESDARYHSIALAKMRKL. A helical transmembrane segment spans residues 136 to 156; sequence FFLVMLTTVASATAWTTITFF. Topologically, residues 157–191 are extracellular; that stretch reads GDSVKMVVDHETNSSIPVEIPRLPIKSFYPWNASH. N-linked (GlcNAc...) asparagine glycans are attached at residues asparagine 169 and asparagine 188. The chain crosses the membrane as a helical span at residues 192 to 212; sequence GMFYMISFAFQIYYVLFSMIH. Topologically, residues 213–351 are cytoplasmic; sequence SNLCDVMFCS…VERHKHVVRL (139 aa). Residues 352-372 traverse the membrane as a helical segment; the sequence is VAAIGDTYGAALLLHMLTSTI. Residues 373-390 lie on the Extracellular side of the membrane; it reads KLTLLAYQATKINGVNVY. The helical transmembrane segment at 391–411 threads the bilayer; the sequence is AFTVVGYLGYALAQVFHFCIF. The Cytoplasmic segment spans residues 412-462; it reads GNRLIEESSSVMEAAYSCHWYDGSEEAKTFVQIVCQQCQKAMSISGAKFFT. Residues 463–483 traverse the membrane as a helical segment; that stretch reads VSLDLFASVLGAVVTYFMVLV. Topologically, residues 484 to 486 are extracellular; it reads QLK.

It belongs to the insect chemoreceptor superfamily. Heteromeric odorant receptor channel (TC 1.A.69) family. Orco subfamily. In terms of assembly, heterodimer with conventional odorant receptors (ORs). Complexes exist early in the endomembrane system in olfactory sensory neurons (OSNs), coupling these complexes to the conserved ciliary trafficking pathway. In terms of tissue distribution, expression is restricted to olfactory sensory neurons (OSNs). Coexpressed with Snmp in a lateral-distal population of OSNs. Expressed in the embryonic antennal-maxillary complex, in all 21 OSNs of the larval dorsal organ, in the pupal antennal OSNs, in all 120 adult maxillary palp neurons and in approximately 70-80% of adult antennal OSNs, where expression is highest at the dorsal-medial edge. Localized to OSN cell bodies and to the distal portion of ciliated OSN dendrites.

It is found in the cell membrane. Odorant coreceptor which complexes with conventional odorant receptors (ORs) to form odorant-sensing units, providing sensitive and prolonged odorant signaling and calcium permeability. Orco is a universal and integral part of the functional odorant receptor, involved in the dendritic localization of other olfactory receptors. Expression of Orco alone leads to formation of rapid and transient ion channels not directly responding to odorants, but directly activated by intracellular cAMP or cGMP. Snmp, Or67d and lush act in concert to capture fatty-acid-derived male pheromone 11-cis vaccenyl acetate (cVA) molecules on the surface of Or67d expressing olfactory dendrites and facilitate their transfer to the odorant-receptor Orco complex. The sequence is that of Odorant receptor coreceptor (Orco) from Drosophila melanogaster (Fruit fly).